Here is a 119-residue protein sequence, read N- to C-terminus: Ribonuclease P protein component (119 aa).

It belongs to the RnpA family. Consists of a catalytic RNA component (M1 or rnpB) and a protein subunit.

It catalyses the reaction Endonucleolytic cleavage of RNA, removing 5'-extranucleotides from tRNA precursor.. In terms of biological role, RNaseP catalyzes the removal of the 5'-leader sequence from pre-tRNA to produce the mature 5'-terminus. It can also cleave other RNA substrates such as 4.5S RNA. The protein component plays an auxiliary but essential role in vivo by binding to the 5'-leader sequence and broadening the substrate specificity of the ribozyme. This is Ribonuclease P protein component from Cronobacter sakazakii (strain ATCC BAA-894) (Enterobacter sakazakii).